The chain runs to 178 residues: Dual-action ribosomal maturation protein DarP (178 aa).

The protein belongs to the DarP family.

Its subcellular location is the cytoplasm. Functionally, member of a network of 50S ribosomal subunit biogenesis factors which assembles along the 30S-50S interface, preventing incorrect 23S rRNA structures from forming. Promotes peptidyl transferase center (PTC) maturation. This is Dual-action ribosomal maturation protein DarP from Haemophilus influenzae (strain PittEE).